The sequence spans 532 residues: MKESNLSELLNRRLALLGERANLSLLEQCLHGIERECLRVTGEGRLAQTPHPEELGSALTNEQITTDYSESLLEFITPALKDPADTLASLDKIHRFAYSKLGNEYLWSPSMPCPLPAEEDIPIAYYGTSNIGQLKYVYRKGLALRYGKTMQCIAGIHYNFSLPEQLWPLLKQAEGFVGTDRDYQSSAYIALIRNFRRYSWLLMYLFGASPALDAGFLRGRSHQLEQLDAETLYLPYATSLRMSDLGYQSKAQAGLTPCYNDLNSYTDSLRKAVATPYAPYVEVGTHKDGEWVQLNTNILQIENEYYSNIRPKRVTYTGERPIQALMARGIQYVEVRCLDINPFLPLGIDIQEARFLDAFLLYCALNDSPLFENNECGNATSNFLAVVKEGRRPGLQLQRQGQPVEMKEWAAQLLEQIAPLAALLDQSHGSDVHSKALDAQLAKVKDSSLTPSAQVLAAMSEHKESFTQFSLRQSQAHAEYFRSQTLSKEEQAAFEEAARKSLEQQTELEQNEVGDFDVFVGAYQASILAISN.

It belongs to the glutamate--cysteine ligase type 1 family. Type 1 subfamily.

The catalysed reaction is L-cysteine + L-glutamate + ATP = gamma-L-glutamyl-L-cysteine + ADP + phosphate + H(+). Its pathway is sulfur metabolism; glutathione biosynthesis; glutathione from L-cysteine and L-glutamate: step 1/2. This chain is Glutamate--cysteine ligase, found in Pseudomonas fluorescens (strain ATCC BAA-477 / NRRL B-23932 / Pf-5).